The sequence spans 288 residues: UTP--glucose-1-phosphate uridylyltransferase (288 aa).

Belongs to the UDPGP type 2 family.

It catalyses the reaction alpha-D-glucose 1-phosphate + UTP + H(+) = UDP-alpha-D-glucose + diphosphate. It participates in glycolipid metabolism; diglucosyl-diacylglycerol biosynthesis. Its function is as follows. Catalyzes the formation of UDP-glucose from glucose-1-phosphate and UTP. This is an intermediate step in the biosynthesis of diglucosyl-diacylglycerol (Glc2-DAG), i.e. the predominant glycolipid found in the S.aureus membrane, which is also used as a membrane anchor for lipoteichoic acid (LTA). In Staphylococcus aureus (strain USA300), this protein is UTP--glucose-1-phosphate uridylyltransferase (gtaB).